A 438-amino-acid polypeptide reads, in one-letter code: Dihydrolipoyllysine-residue acetyltransferase component of pyruvate dehydrogenase complex (438 aa).

The 76-residue stretch at 1–76 (MFKVKFADIG…KVGDVVMEIE (76 aa)) folds into the Lipoyl-binding domain. Lys42 carries the post-translational modification N6-lipoyllysine. The Peripheral subunit-binding (PSBD) domain occupies 132-169 (KATPLARKVAADLNIDLSLVTPTGPNQRILVADIKNHQ). A compositionally biased stretch (polar residues) spans 172–181 (STQLASQPIS). The interval 172 to 192 (STQLASQPISQPAPTPSPSAH) is disordered. His411 is a catalytic residue.

It belongs to the 2-oxoacid dehydrogenase family. In terms of assembly, forms a 24-polypeptide structural core with octahedral symmetry. (R)-lipoate serves as cofactor.

The enzyme catalyses N(6)-[(R)-dihydrolipoyl]-L-lysyl-[protein] + acetyl-CoA = N(6)-[(R)-S(8)-acetyldihydrolipoyl]-L-lysyl-[protein] + CoA. The pyruvate dehydrogenase complex catalyzes the overall conversion of pyruvate to acetyl-CoA and CO(2). It contains multiple copies of three enzymatic components: pyruvate dehydrogenase (E1), dihydrolipoamide acetyltransferase (E2) and lipoamide dehydrogenase (E3). This chain is Dihydrolipoyllysine-residue acetyltransferase component of pyruvate dehydrogenase complex (pdhC), found in Mycoplasma capricolum subsp. capricolum (strain California kid / ATCC 27343 / NCTC 10154).